The following is a 136-amino-acid chain: S-protein homolog 6 (136 aa).

An N-terminal signal peptide occupies residues 1 to 17; the sequence is MFIIIFIVLISLIGCET. N-linked (GlcNAc...) asparagine glycosylation is found at asparagine 76 and asparagine 108.

This sequence belongs to the plant self-incompatibility (S1) protein family.

The protein resides in the secreted. This is S-protein homolog 6 from Arabidopsis thaliana (Mouse-ear cress).